We begin with the raw amino-acid sequence, 292 residues long: Phosphoribosylglycinamide formyltransferase, chloroplastic (292 aa).

The N-terminal 65 residues, 1–65 (MESRVLFSSQ…KAASSTPQIV (65 aa)), are a transit peptide targeting the chloroplast. 88–90 (GSN) lines the N(1)-(5-phospho-beta-D-ribosyl)glycinamide pocket. (6R)-10-formyltetrahydrofolate is bound by residues 167 to 170 (LKLI) and N184. H186 acts as the Proton donor in catalysis. D227 is a binding site for (6R)-10-formyltetrahydrofolate. Position 256 (E256) interacts with N(1)-(5-phospho-beta-D-ribosyl)glycinamide.

This sequence belongs to the GART family.

The protein resides in the plastid. The protein localises to the chloroplast. The enzyme catalyses N(1)-(5-phospho-beta-D-ribosyl)glycinamide + (6R)-10-formyltetrahydrofolate = N(2)-formyl-N(1)-(5-phospho-beta-D-ribosyl)glycinamide + (6S)-5,6,7,8-tetrahydrofolate + H(+). It functions in the pathway purine metabolism; IMP biosynthesis via de novo pathway; N(2)-formyl-N(1)-(5-phospho-D-ribosyl)glycinamide from N(1)-(5-phospho-D-ribosyl)glycinamide (10-formyl THF route): step 1/1. The polypeptide is Phosphoribosylglycinamide formyltransferase, chloroplastic (PUR3) (Arabidopsis thaliana (Mouse-ear cress)).